Here is a 385-residue protein sequence, read N- to C-terminus: Centrosomal protein of 44 kDa (385 aa).

A binds with microtubules and centrioles region spans residues 11–191; that stretch reads RKLEQRLRTL…TKCYKSALLE (181 aa). Residues 194-204 show a composition bias toward acidic residues; sequence EEEEPTSDCEE. Residues 194–224 are disordered; that stretch reads EEEEPTSDCEEDSHLQREMGSPFETAEETPN. Coiled-coil stretches lie at residues 224–263 and 353–379; these read NSEQ…KGKI and TEES…ELLK.

Binds to centriolar microtubules.

The protein resides in the cytoplasm. It localises to the cytoskeleton. The protein localises to the microtubule organizing center. It is found in the centrosome. Its subcellular location is the centriole. The protein resides in the spindle pole. It localises to the midbody. Functionally, centriole-enriched microtubule-binding protein involved in centriole biogenesis. In collaboration with CEP295 and POC1B, is required for the centriole-to-centrosome conversion by ensuring the formation of bona fide centriole wall. Functions as a linker component that maintains centrosome cohesion. Associates with CROCC and regulates its stability and localization to the centrosome. The sequence is that of Centrosomal protein of 44 kDa (cep44) from Xenopus tropicalis (Western clawed frog).